Reading from the N-terminus, the 87-residue chain is Large ribosomal subunit protein bL31B (87 aa).

The protein belongs to the bacterial ribosomal protein bL31 family. Type B subfamily. As to quaternary structure, part of the 50S ribosomal subunit.

The protein is Large ribosomal subunit protein bL31B of Burkholderia thailandensis (strain ATCC 700388 / DSM 13276 / CCUG 48851 / CIP 106301 / E264).